Consider the following 185-residue polypeptide: Large ribosomal subunit protein uL18 (185 aa).

It belongs to the universal ribosomal protein uL18 family. As to quaternary structure, part of the 50S ribosomal subunit. Contacts the 5S and 23S rRNAs.

In terms of biological role, this is one of the proteins that bind and probably mediate the attachment of the 5S RNA into the large ribosomal subunit, where it forms part of the central protuberance. The chain is Large ribosomal subunit protein uL18 from Halorubrum lacusprofundi (strain ATCC 49239 / DSM 5036 / JCM 8891 / ACAM 34).